A 447-amino-acid polypeptide reads, in one-letter code: GTPase Der (447 aa).

EngA-type G domains lie at 3 to 167 and 180 to 353; these read PVVA…HLED and IKLA…KAAN. Residues 9–16, 56–60, 119–122, 186–193, 233–237, and 298–301 contribute to the GTP site; these read GRPNVGKS, DTGGF, NKAE, DTAGL, and NKWD. Positions 354–438 constitute a KH-like domain; sequence CKMSTPILTR…PMRIEFKSST (85 aa).

This sequence belongs to the TRAFAC class TrmE-Era-EngA-EngB-Septin-like GTPase superfamily. EngA (Der) GTPase family. As to quaternary structure, associates with the 50S ribosomal subunit.

Its function is as follows. GTPase that plays an essential role in the late steps of ribosome biogenesis. The chain is GTPase Der from Albidiferax ferrireducens (strain ATCC BAA-621 / DSM 15236 / T118) (Rhodoferax ferrireducens).